We begin with the raw amino-acid sequence, 210 residues long: Putative RING-H2 finger protein ATL50 (210 aa).

Residues Ile35 to Leu55 form a helical membrane-spanning segment. The RING-type; atypical zinc-finger motif lies at Cys122 to Arg164. The tract at residues Ser187 to Lys210 is disordered.

The protein belongs to the RING-type zinc finger family. ATL subfamily.

It localises to the membrane. The catalysed reaction is S-ubiquitinyl-[E2 ubiquitin-conjugating enzyme]-L-cysteine + [acceptor protein]-L-lysine = [E2 ubiquitin-conjugating enzyme]-L-cysteine + N(6)-ubiquitinyl-[acceptor protein]-L-lysine.. Its pathway is protein modification; protein ubiquitination. The protein is Putative RING-H2 finger protein ATL50 (ATL50) of Arabidopsis thaliana (Mouse-ear cress).